The sequence spans 157 residues: S-ribosylhomocysteine lyase (157 aa).

Residues His-54, His-58, and Cys-126 each coordinate Fe cation.

The protein belongs to the LuxS family. Homodimer. Fe cation is required as a cofactor.

It carries out the reaction S-(5-deoxy-D-ribos-5-yl)-L-homocysteine = (S)-4,5-dihydroxypentane-2,3-dione + L-homocysteine. Its function is as follows. Involved in the synthesis of autoinducer 2 (AI-2) which is secreted by bacteria and is used to communicate both the cell density and the metabolic potential of the environment. The regulation of gene expression in response to changes in cell density is called quorum sensing. Catalyzes the transformation of S-ribosylhomocysteine (RHC) to homocysteine (HC) and 4,5-dihydroxy-2,3-pentadione (DPD). The polypeptide is S-ribosylhomocysteine lyase (Bacillus velezensis (strain DSM 23117 / BGSC 10A6 / LMG 26770 / FZB42) (Bacillus amyloliquefaciens subsp. plantarum)).